Reading from the N-terminus, the 1272-residue chain is Ubiquitin carboxyl-terminal hydrolase 2 (1272 aa).

Positions T736–Q1258 constitute a USP domain. C745 serves as the catalytic Nucleophile. Residues D884–P918 form a disordered region. Acidic residues predominate over residues N902–D911. Residue S907 is modified to Phosphoserine. H1209 (proton acceptor) is an active-site residue.

This sequence belongs to the peptidase C19 family. Forms a ternary complex with RSP5 and RUP1. Interacts with RSP5. Interacts with FZO1.

The enzyme catalyses Thiol-dependent hydrolysis of ester, thioester, amide, peptide and isopeptide bonds formed by the C-terminal Gly of ubiquitin (a 76-residue protein attached to proteins as an intracellular targeting signal).. In terms of biological role, has an ATP-independent isopeptidase activity, cleaving at the C-terminus of the ubiquitin moiety in natural or engineered linear fusion proteins, irrespective of their size or the presence of an N-terminal extension to ubiquitin. Hydrolyzes polyubiquitinated 'Lys-63' polyubiquitin chains in RPO21, producing mono-ubiquitinated RNA polymerase II. Removes ubiquitin chains that initiate proteolysis of FZO1 and inhibit mitochondrial fusion. This is Ubiquitin carboxyl-terminal hydrolase 2 (UBP2) from Saccharomyces cerevisiae (strain ATCC 204508 / S288c) (Baker's yeast).